Here is a 393-residue protein sequence, read N- to C-terminus: S-adenosylmethionine synthase (393 aa).

Residue His-17 coordinates ATP. Asp-19 is a Mg(2+) binding site. K(+) is bound at residue Glu-45. Positions 58 and 106 each coordinate L-methionine. The segment at 106 to 116 (QSAHIAQGVDA) is flexible loop. ATP contacts are provided by residues 171 to 173 (DAK), 237 to 238 (KF), Asp-246, 252 to 253 (RK), Ala-269, and Lys-273. Asp-246 lines the L-methionine pocket. Lys-277 contributes to the L-methionine binding site.

This sequence belongs to the AdoMet synthase family. Homotetramer; dimer of dimers. Requires Mg(2+) as cofactor. K(+) serves as cofactor.

The protein localises to the cytoplasm. The catalysed reaction is L-methionine + ATP + H2O = S-adenosyl-L-methionine + phosphate + diphosphate. The protein operates within amino-acid biosynthesis; S-adenosyl-L-methionine biosynthesis; S-adenosyl-L-methionine from L-methionine: step 1/1. In terms of biological role, catalyzes the formation of S-adenosylmethionine (AdoMet) from methionine and ATP. The overall synthetic reaction is composed of two sequential steps, AdoMet formation and the subsequent tripolyphosphate hydrolysis which occurs prior to release of AdoMet from the enzyme. The sequence is that of S-adenosylmethionine synthase from Jannaschia sp. (strain CCS1).